The chain runs to 312 residues: Elongation factor Ts (312 aa).

The tract at residues 80-83 (TDFV) is involved in Mg(2+) ion dislocation from EF-Tu.

It belongs to the EF-Ts family.

Its subcellular location is the cytoplasm. In terms of biological role, associates with the EF-Tu.GDP complex and induces the exchange of GDP to GTP. It remains bound to the aminoacyl-tRNA.EF-Tu.GTP complex up to the GTP hydrolysis stage on the ribosome. In Paramagnetospirillum magneticum (strain ATCC 700264 / AMB-1) (Magnetospirillum magneticum), this protein is Elongation factor Ts.